Consider the following 198-residue polypeptide: V-type ATP synthase subunit E (198 aa).

This sequence belongs to the V-ATPase E subunit family.

Functionally, produces ATP from ADP in the presence of a proton gradient across the membrane. The polypeptide is V-type ATP synthase subunit E (Clostridium perfringens (strain SM101 / Type A)).